Here is a 277-residue protein sequence, read N- to C-terminus: Urease accessory protein UreD (277 aa).

It belongs to the UreD family. As to quaternary structure, ureD, UreF and UreG form a complex that acts as a GTP-hydrolysis-dependent molecular chaperone, activating the urease apoprotein by helping to assemble the nickel containing metallocenter of UreC. The UreE protein probably delivers the nickel.

It localises to the cytoplasm. In terms of biological role, required for maturation of urease via the functional incorporation of the urease nickel metallocenter. The polypeptide is Urease accessory protein UreD (Pseudomonas entomophila (strain L48)).